A 626-amino-acid polypeptide reads, in one-letter code: Phosphomethylpyrimidine synthase (626 aa).

A disordered region spans residues 1-27 (MSKQEKAISLSESAQVDQQSVQPLPNS). The segment covering 10-25 (LSESAQVDQQSVQPLP) has biased composition (polar residues). Substrate is bound by residues asparagine 232, methionine 261, tyrosine 290, histidine 326, 346-348 (SRG), 387-390 (DGLR), and glutamate 426. Histidine 430 serves as a coordination point for Zn(2+). Tyrosine 453 serves as a coordination point for substrate. Position 494 (histidine 494) interacts with Zn(2+). Residues cysteine 574, cysteine 577, and cysteine 582 each contribute to the [4Fe-4S] cluster site.

The protein belongs to the ThiC family. In terms of assembly, homodimer. The cofactor is [4Fe-4S] cluster.

It carries out the reaction 5-amino-1-(5-phospho-beta-D-ribosyl)imidazole + S-adenosyl-L-methionine = 4-amino-2-methyl-5-(phosphooxymethyl)pyrimidine + CO + 5'-deoxyadenosine + formate + L-methionine + 3 H(+). It participates in cofactor biosynthesis; thiamine diphosphate biosynthesis. Its function is as follows. Catalyzes the synthesis of the hydroxymethylpyrimidine phosphate (HMP-P) moiety of thiamine from aminoimidazole ribotide (AIR) in a radical S-adenosyl-L-methionine (SAM)-dependent reaction. The chain is Phosphomethylpyrimidine synthase from Pseudomonas entomophila (strain L48).